The following is a 271-amino-acid chain: Small ribosomal subunit protein uS2 (271 aa).

It belongs to the universal ribosomal protein uS2 family.

In Wolbachia pipientis subsp. Culex pipiens (strain wPip), this protein is Small ribosomal subunit protein uS2.